Consider the following 296-residue polypeptide: Protease HtpX homolog (296 aa).

2 consecutive transmembrane segments (helical) span residues 14–34 and 39–59; these read VVLL…VGYL and YQFG…SMIF. Histidine 143 is a binding site for Zn(2+). Residue glutamate 144 is part of the active site. Zn(2+) is bound at residue histidine 147. Helical transmembrane passes span 158–178 and 195–215; these read IAVA…RMLF and ILVL…ASLV. A Zn(2+)-binding site is contributed by glutamate 224.

Belongs to the peptidase M48B family. Zn(2+) serves as cofactor.

The protein resides in the cell membrane. This is Protease HtpX homolog from Streptococcus agalactiae serotype III (strain NEM316).